The primary structure comprises 163 residues: MVTKKSKKAWPWLWFSVLVILLDQLSKYLANHFLSLGHPVKILPFLNFTLNYNTGAAFSFLGTENGWQIIFFAAISFVVSIFLILWLSRTSRSEIMMLLGLSLIIGGALGNFIDRLRWSYVTDFIDFHIKDWHFATFNVADSAICVGVFLLIVHMLLTPSSKP.

Transmembrane regions (helical) follow at residues 9–29, 42–62, 67–87, and 93–113; these read AWPWLWFSVLVILLDQLSKYL, ILPFLNFTLNYNTGAAFSFLG, WQIIFFAAISFVVSIFLILWL, and SEIMMLLGLSLIIGGALGNFI. Residues Asp-123 and Asp-141 contribute to the active site. A helical transmembrane segment spans residues 137-157; it reads FNVADSAICVGVFLLIVHMLL.

This sequence belongs to the peptidase A8 family.

It localises to the cell inner membrane. It carries out the reaction Release of signal peptides from bacterial membrane prolipoproteins. Hydrolyzes -Xaa-Yaa-Zaa-|-(S,diacylglyceryl)Cys-, in which Xaa is hydrophobic (preferably Leu), and Yaa (Ala or Ser) and Zaa (Gly or Ala) have small, neutral side chains.. It functions in the pathway protein modification; lipoprotein biosynthesis (signal peptide cleavage). Its function is as follows. This protein specifically catalyzes the removal of signal peptides from prolipoproteins. This chain is Lipoprotein signal peptidase, found in Coxiella burnetii (strain RSA 493 / Nine Mile phase I).